A 251-amino-acid chain; its full sequence is Triosephosphate isomerase (251 aa).

9 to 11 (NWK) contacts substrate. The active-site Electrophile is the histidine 94. Catalysis depends on glutamate 166, which acts as the Proton acceptor. Residues glycine 172, serine 211, and 232–233 (GG) each bind substrate.

It belongs to the triosephosphate isomerase family. As to quaternary structure, homodimer.

It is found in the cytoplasm. It carries out the reaction D-glyceraldehyde 3-phosphate = dihydroxyacetone phosphate. Its pathway is carbohydrate biosynthesis; gluconeogenesis. It participates in carbohydrate degradation; glycolysis; D-glyceraldehyde 3-phosphate from glycerone phosphate: step 1/1. Functionally, involved in the gluconeogenesis. Catalyzes stereospecifically the conversion of dihydroxyacetone phosphate (DHAP) to D-glyceraldehyde-3-phosphate (G3P). This Xanthomonas euvesicatoria pv. vesicatoria (strain 85-10) (Xanthomonas campestris pv. vesicatoria) protein is Triosephosphate isomerase.